We begin with the raw amino-acid sequence, 152 residues long: Putative rho GDP-dissociation inhibitor 2 (152 aa).

This sequence belongs to the Rho GDI family.

The protein localises to the cytoplasm. Functionally, regulates the GDP/GTP exchange reaction of the Rho proteins by inhibiting the dissociation of GDP from them, and the subsequent binding of GTP to them. This chain is Putative rho GDP-dissociation inhibitor 2 (rdiB), found in Dictyostelium discoideum (Social amoeba).